Consider the following 174-residue polypeptide: UPF0200 protein PAE1629 (174 aa).

An ATP-binding site is contributed by glycine 9–threonine 16.

Belongs to the UPF0200 family.

This Pyrobaculum aerophilum (strain ATCC 51768 / DSM 7523 / JCM 9630 / CIP 104966 / NBRC 100827 / IM2) protein is UPF0200 protein PAE1629.